The chain runs to 165 residues: Small ribosomal subunit protein bS16 (165 aa).

Residues 110 to 165 are disordered; it reads LSEANNGPTAEAITEKKKKAREDKEAKEAAEKAAAEKAAAAESEEAPAEEAAAEEA. Residues 129-144 are compositionally biased toward basic and acidic residues; sequence AREDKEAKEAAEKAAA. The span at 151–165 shows a compositional bias: acidic residues; that stretch reads ESEEAPAEEAAAEEA.

The protein belongs to the bacterial ribosomal protein bS16 family.

In Corynebacterium glutamicum (strain R), this protein is Small ribosomal subunit protein bS16.